The sequence spans 540 residues: Ribonuclease Y (540 aa).

Residues 4-24 (TILVPVAVAIVSVLVGGCAGY) form a helical membrane-spanning segment. The KH domain maps to 230 to 293 (TVSVVNLPND…EIAKRALERL (64 aa)). In terms of domain architecture, HD spans 356–449 (VLSHSIEVGK…VVAADTISSA (94 aa)).

It belongs to the RNase Y family.

The protein localises to the cell membrane. In terms of biological role, endoribonuclease that initiates mRNA decay. The sequence is that of Ribonuclease Y from Lactobacillus gasseri (strain ATCC 33323 / DSM 20243 / BCRC 14619 / CIP 102991 / JCM 1131 / KCTC 3163 / NCIMB 11718 / NCTC 13722 / AM63).